Here is a 114-residue protein sequence, read N- to C-terminus: Probable 4-amino-4-deoxy-L-arabinose-phosphoundecaprenol flippase subunit ArnE (114 aa).

Residues 39–112 (RSPWLWLALF…VIGGVALLGQ (74 aa)) form the EamA domain. 3 helical membrane passes run 41–61 (PWLW…LLVL), 64–84 (LPVS…TLIA), and 91–111 (PVDV…ALLG).

The protein belongs to the ArnE family. Heterodimer of ArnE and ArnF.

It is found in the cell inner membrane. The protein operates within bacterial outer membrane biogenesis; lipopolysaccharide biosynthesis. In terms of biological role, translocates 4-amino-4-deoxy-L-arabinose-phosphoundecaprenol (alpha-L-Ara4N-phosphoundecaprenol) from the cytoplasmic to the periplasmic side of the inner membrane. The sequence is that of Probable 4-amino-4-deoxy-L-arabinose-phosphoundecaprenol flippase subunit ArnE from Pseudomonas fluorescens (strain Pf0-1).